Reading from the N-terminus, the 2385-residue chain is MPVLGVASKLRQPAVGSKPVHTALPIPNLGTTGSQHCSSRPLELTETESSMLSCQLALKSTCEFGEKKPLQGKAKEKEDSKIYTDWANHYLAKSGHKRLIKDLQQDIADGVLLAEIIQIIANEKVEDINGCPRSQSQMIENVDVCLSFLAARGVNVQGLSAEEIRNGNLKAILGLFFSLSRYKQQQHHQQQYYQSLVELQQRVTHASPPSEASQAKTQQDMQSSLAARYATQSNHSGIATSQKKPTRLPGPSRVPAAGSSSKVQGASNLNRRSQSFNSIDKNKPPNYANGNEKDSSKGPQSSSGVNGNVQPPSTAGQPPASAIPSPSASKPWRSKSMNVKHSATSTMLTVKQSSTATSPTPSSDRLKPPVSEGVKTAPSGQKSMLEKFKLVNARTALRPPQPPSSGPSDGGKDDDAFSESGEMEGFNSGLNSGGSTNSSPKVSPKLAPPKAGSKNLSNKKSLLQPKEKEEKNRDKNKVCTEKPVKEEKDQVTEMAPKKTSKIASLIPKGSKTTAAKKESLIPSSSGIPKPGSKVPTVKQTISPGSTASKESEKFRTTKGSPSQSLSKPITMEKASASSCPAPLEGREAGQASPSGSCTMTVAQSSGQSTGNGAVQLPQQQQHSHPNTATVAPFIYRAHSENEGTALPSADSCTSPTKMDLSYSKTAKQCLEEISGEDPETRRMRTVKNIADLRQNLEETMSSLRGTQISHSTLETTFDSTVTTEVNGRTIPNLTSRPTPMTWRLGQACPRLQAGDAPSLGAGYPRSGTSRFIHTDPSRFMYTTPLRRAAVSRLGNMSQIDMSEKASSDLDMSSEVDVGGYMSDGDILGKSLRTDDINSGYMTDGGLNLYTRSLNRIPDTATSRDIIQRGVHDVTVDADSWDDSSSVSSGLSDTLDNISTDDLNTTSSVSSYSNITVPSRKNTQLRTDSEKRSTTDETWDSPEELKKPEEDFDSHGDAGGKWKTVSSGLPEDPEKAGQKASLSVSQTGSWRRGMSAQGGAPSRQKAGTSALKTPGKTDDAKASEKGKAPLKGSSLQRSPSDAGKSSGDEGKKPPSGIGRSTATSSFGFKKPSGVGSSAMITSSGATITSGSATLGKIPKSAAIGGKSNAGRKTSLDGSQNQDDVVLHVSSKTTLQYRSLPRPSKSSTSGIPGRGGHRSSTSSIDSNVSSKSAGATTSKLREPTKIGSGRSSPVTVNQTDKEKEKVAVSDSESVSLSGSPKSSPTSASACGAQGLRQPGSKYPDIASPTFRRLFGAKAGGKSASAPNTEGVKSSSVMPSPSTTLARQGSLESPSSGTGSMGSAGGLSGSSSPLFNKPSDLTTDVISLSHSLASSPASVHSFTSGGLVWAANMSSSSAGSKDTPSYQSMTSLHTSSESIDLPLSHHGSLSGLTTGTHEVQSLLMRTGSVRSTLSESMQLDRNTLPKKGLRYTPSSRQANQEEGKEWLRSHSTGGLQDTGNQSPLVSPSAMSSSAAGKYHFSNLVSPTNLSQFNLPGPSMMRSNSIPAQDSSFDLYDDSQLCGSATSLEERPRAISHSGSFRDSMEEVHGSSLSLVSSTSSLYSTAEEKAHSEQIHKLRRELVASQEKVATLTSQLSANAHLVAAFEKSLGNMTGRLQSLTMTAEQKESELIELRETIEMLKAQNSAAQAAIQGALNGPDHPPKDLRIRRQHSSESVSSINSATSHSSIGSGNDADSKKKKKKNWVNSRGSELRSSFKQAFGKKKSTKPPSSHSDIEELTDSSLPASPKLPHNAGDCGSASMKPSQSASASPLVWPPKKRQNGPVIYKHRSRICECTEAEAEIILQLKSELREKELKLTDIRLEALSSAHHLDQIREAMNRMQNEIEILKAENDRLKAETGNTAKPTRPPSESSSSTSSSSSRQSLGLSLNNLNITEAVSSDILLDDAGDATGHKDGRSVKIIVSISKGYGRAKDQKSQAYLIGSIGVSGKTKWDVLDGVIRRLFKEYVFRIDTSTSLGLSSDCIASYCIGDLIRSHNLEVPELLPCGYLVGDNNIITVNLKGVEENSLDSFVFDTLIPKPITQRYFNLLMEHHRIILSGPSGTGKTYLANKLAEYVITKSGRKKTEDAIATFNVDHKSSKELQQYLANLAEQCSADNNGVELPVVIILDNLHHVGSLSDIFNGFLNCKYNKCPYIIGTMNQGVSSSPNLELHHNFRWVLCANHTEPVKGFLGRYLRRKLIEIEIERNIRNNDLVKIIDWIPKTWHHLNSFLETHSSSDVTIGPRLFLPCPMDVEGSRVWFMDLWNYSLVPYILEAVREGLQMYGKRTPWEDPSKWVLDTYPWSSATLPQESPALLQLRPEDVGYESCTSTKEATTSKHIPQTDTEGDPLMNMLMKLQEAANYSSTQSCDSESTSHHEDILDSSLESTL.

The disordered stretch occupies residues 17–38 (SKPVHTALPIPNLGTTGSQHCS). Positions 29 to 38 (LGTTGSQHCS) are enriched in polar residues. One can recognise a Calponin-homology (CH) domain in the interval 77–184 (KEDSKIYTDW…LFFSLSRYKQ (108 aa)). The disordered stretch occupies residues 203–625 (VTHASPPSEA…LPQQQQHSHP (423 aa)). Polar residues-rich tracts occupy residues 210-243 (SEASQAKTQQDMQSSLAARYATQSNHSGIATSQK), 258-279 (GSSSKVQGASNLNRRSQSFNSI), and 297-316 (KGPQSSSGVNGNVQPPSTAG). Positions 318–329 (PPASAIPSPSAS) are enriched in low complexity. Over residues 335 to 352 (KSMNVKHSATSTMLTVKQ) the composition is skewed to polar residues. Low complexity-rich tracts occupy residues 353–363 (SSTATSPTPSS) and 427–439 (NSGLNSGGSTNSS). The segment covering 465–491 (PKEKEEKNRDKNKVCTEKPVKEEKDQV) has biased composition (basic and acidic residues). Residues 521–535 (IPSSSGIPKPGSKVP) are compositionally biased toward low complexity. Polar residues-rich tracts occupy residues 537-548 (VKQTISPGSTAS), 557-567 (TKGSPSQSLSK), and 591-625 (ASPSGSCTMTVAQSSGQSTGNGAVQLPQQQQHSHP). The stretch at 679-707 (ETRRMRTVKNIADLRQNLEETMSSLRGTQ) forms a coiled coil. Disordered stretches follow at residues 877-1312 (ADSW…SPLF), 1351-1370 (SSSSAGSKDTPSYQSMTSLH), 1410-1468 (LSES…SAMS), 1650-1778 (GALN…KRQN), 1850-1881 (DRLKAETGNTAKPTRPPSESSSSTSSSSSRQS), and 2360-2385 (SSTQSCDSESTSHHEDILDSSLESTL). Residues 882–895 (DSSSVSSGLSDTLD) show a composition bias toward low complexity. Positions 896 to 925 (NISTDDLNTTSSVSSYSNITVPSRKNTQLR) are enriched in polar residues. Positions 942–959 (EELKKPEEDFDSHGDAGG) are enriched in basic and acidic residues. Residues 979–988 (ASLSVSQTGS) are compositionally biased toward polar residues. Basic and acidic residues predominate over residues 1014 to 1026 (GKTDDAKASEKGK). Composition is skewed to low complexity over residues 1074–1092 (GSSAMITSSGATITSGSAT) and 1157–1170 (SSTSSIDSNVSSKS). Polar residues predominate over residues 1187–1196 (GRSSPVTVNQ). 2 stretches are compositionally biased toward low complexity: residues 1206–1226 (VSDSESVSLSGSPKSSPTSAS) and 1253–1263 (GAKAGGKSASA). Over residues 1264–1289 (PNTEGVKSSSVMPSPSTTLARQGSLE) the composition is skewed to polar residues. The segment covering 1296–1305 (GSMGSAGGLS) has biased composition (gly residues). The span at 1436–1445 (NQEEGKEWLR) shows a compositional bias: basic and acidic residues. Over residues 1446-1462 (SHSTGGLQDTGNQSPLV) the composition is skewed to polar residues. Ser-1459 and Ser-1463 each carry phosphoserine. A coiled-coil region spans residues 1562–1653 (AEEKAHSEQI…AQAAIQGALN (92 aa)). Over residues 1672–1689 (SVSSINSATSHSSIGSGN) the composition is skewed to low complexity. A compositionally biased stretch (polar residues) spans 1701-1714 (WVNSRGSELRSSFK). Residues 1794–1861 (EAEAEIILQL…LKAETGNTAK (68 aa)) adopt a coiled-coil conformation. Low complexity predominate over residues 1867 to 1881 (SESSSSTSSSSSRQS).

Belongs to the Nav/unc-53 family. Highly expressed in brain. Expressed at low levels in heart and placenta. Present in activated T-cells but not in resting T-cells (at protein level). Down-regulated in primary neuroblastoma.

It is found in the nucleus outer membrane. In terms of biological role, plays a role in cell migration. May be involved in neuron regeneration. May regulate IL2 production by T-cells. This chain is Neuron navigator 3 (NAV3), found in Homo sapiens (Human).